A 353-amino-acid polypeptide reads, in one-letter code: Palmitoyltransferase SWF1 (353 aa).

A topological domain (lumenal) is located at residue Met1. The helical transmembrane segment at 2 to 22 (LFTLIVCLTIISSLATFLLLF) threads the bilayer. At 23-61 (GDSPSFRNTPIQKLRNSLLSISRDIFQFYHWLDEKLNGQ) the chain is on the cytoplasmic side. Residues 62–82 (LLKILNWLVPVGYVMVVTVCF) traverse the membrane as a helical segment. Residues 83-100 (QQFLTHTLPMLSSPGLFR) are Lumenal-facing. A helical transmembrane segment spans residues 101-121 (LFTIYFSMVLIYASTILAAFS). At 122-190 (DPGRITTINL…NNCVGYYNYK (69 aa)) the chain is on the cytoplasmic side. One can recognise a DHHC domain in the interval 147–197 (KTCSTCHIAKPARSKHCSVCNQCFLLYDHHCVWINNCVGYYNYKWFMLFLI). The active-site S-palmitoyl cysteine intermediate is Cys177. The helical transmembrane segment at 191–211 (WFMLFLISNINMLGYGGWLCY) threads the bilayer. Residues 212–233 (WALTPVSWRKITSTNNANKVTG) lie on the Lumenal side of the membrane. The helical transmembrane segment at 234-254 (IFLILCSIFIVITTLFTFLHL) threads the bilayer. The Cytoplasmic portion of the chain corresponds to 255 to 353 (RYIYLGVTTN…WNNLIERLKW (99 aa)).

It belongs to the DHHC palmitoyltransferase family. SWF1 subfamily.

It localises to the endoplasmic reticulum membrane. It catalyses the reaction L-cysteinyl-[protein] + hexadecanoyl-CoA = S-hexadecanoyl-L-cysteinyl-[protein] + CoA. In terms of biological role, palmitoyltransferase that targets several endosomal SNAREs. Palmitoylates the SNAREs at cysteine residues close to the cytoplasmic end of their transmembrane domain. May have a role in the cellular quality control of transmembrane domain-containing proteins. This Candida albicans (strain SC5314 / ATCC MYA-2876) (Yeast) protein is Palmitoyltransferase SWF1 (SWF1).